The sequence spans 372 residues: Probable arabinan endo-1,5-alpha-L-arabinosidase B (372 aa).

A signal peptide spans 1–16 (MTVLVALFCLVTWTLC). The span at 23–34 (STQGTQQPQQPE) shows a compositional bias: low complexity. The segment at 23 to 52 (STQGTQQPQQPEKTPHPHPQPEDAFPPTHA) is disordered. Asp59 acts as the Proton acceptor in catalysis. Residue Asn120 is glycosylated (N-linked (GlcNAc...) asparagine). The Proton donor role is filled by Glu252. Asn363 carries N-linked (GlcNAc...) asparagine glycosylation.

The protein belongs to the glycosyl hydrolase 43 family.

It is found in the secreted. The catalysed reaction is Endohydrolysis of (1-&gt;5)-alpha-arabinofuranosidic linkages in (1-&gt;5)-arabinans.. It functions in the pathway glycan metabolism; L-arabinan degradation. In terms of biological role, endo-1,5-alpha-L-arabinanase involved in degradation of pectin. Its preferred substrate is linear 1,5-alpha-L-arabinan. This is Probable arabinan endo-1,5-alpha-L-arabinosidase B (abnB) from Aspergillus fumigatus (strain ATCC MYA-4609 / CBS 101355 / FGSC A1100 / Af293) (Neosartorya fumigata).